Consider the following 349-residue polypeptide: S-adenosylmethionine:tRNA ribosyltransferase-isomerase (349 aa).

The protein belongs to the QueA family. In terms of assembly, monomer.

The protein localises to the cytoplasm. It catalyses the reaction 7-aminomethyl-7-carbaguanosine(34) in tRNA + S-adenosyl-L-methionine = epoxyqueuosine(34) in tRNA + adenine + L-methionine + 2 H(+). It functions in the pathway tRNA modification; tRNA-queuosine biosynthesis. Functionally, transfers and isomerizes the ribose moiety from AdoMet to the 7-aminomethyl group of 7-deazaguanine (preQ1-tRNA) to give epoxyqueuosine (oQ-tRNA). This Ruegeria sp. (strain TM1040) (Silicibacter sp.) protein is S-adenosylmethionine:tRNA ribosyltransferase-isomerase.